The chain runs to 503 residues: SWI/SNF and RSC complexes subunit ssr2 (503 aa).

The region spanning 18–115 is the SWIRM domain; the sequence is IIVPSYAGWF…YQIDPETRPA (98 aa). Ser-175 is subject to Phosphoserine. The ZZ-type; degenerate zinc-finger motif lies at 188–242; that stretch reads RVDKVCFTCGVNCSQTWYHNLKNKKYDICPNCYKQGRFSSSFNSSDFLCMDAIDF. The Zn(2+) site is built by Cys-193, Cys-196, Cys-216, and Cys-219. The SANT domain occupies 245–296; it reads DEEKPWSNQETLLLLEAIETYGDDWNQIALHVGSRTKEQCLIHFLQIPIEDP. Phosphoserine is present on Ser-306.

This sequence belongs to the SMARCC family. Component of the RSC complex composed of at least arp9, arp42, rsc1, rsc4, rsc7, rsc9, rsc58, sfh1, snf21, ssr1, ssr2, ssr3 and ssr4. The complex interacts with histone and histone variant components of centromeric chromatin. Component of the SWI/SNF global transcription activator complex composed of at least arp9, arp42, snf5, snf22, snf30, sbf59, sol1, ssr1, ssr2, ssr3, ssr4 and tfg3.

It localises to the cytoplasm. The protein localises to the nucleus. Component of the chromatin structure remodeling complex (RSC), which is involved in transcription regulation and nucleosome positioning. Controls particularly membrane and organelle development genes. Part of the SWI/SNF complex, an ATP-dependent chromatin remodeling complex, required for the positive and negative regulation of gene expression of a large number of genes. It changes chromatin structure by altering DNA-histone contacts within a nucleosome, leading eventually to a change in nucleosome position, thus facilitating or repressing binding of gene-specific transcription factors. The sequence is that of SWI/SNF and RSC complexes subunit ssr2 (ssr2) from Schizosaccharomyces pombe (strain 972 / ATCC 24843) (Fission yeast).